A 186-amino-acid chain; its full sequence is Ribosome-recycling factor (186 aa).

The protein belongs to the RRF family.

It localises to the cytoplasm. In terms of biological role, responsible for the release of ribosomes from messenger RNA at the termination of protein biosynthesis. May increase the efficiency of translation by recycling ribosomes from one round of translation to another. This chain is Ribosome-recycling factor, found in Rhodopseudomonas palustris (strain ATCC BAA-98 / CGA009).